Consider the following 179-residue polypeptide: Ubiquitin-conjugating enzyme E2 C (179 aa).

Residues 1-31 (MASQNVDPAAASSVASRKGQESGTSAARGSV) are disordered. The UBC core domain maps to 30–179 (SVGKRLQQEL…YQKQVREKEI (150 aa)). Catalysis depends on Cys-114, which acts as the Glycyl thioester intermediate.

This sequence belongs to the ubiquitin-conjugating enzyme family. Component of the APC/C complex. Autoubiquitinated by the APC/C complex, leading to its degradation by the proteasome.

The enzyme catalyses S-ubiquitinyl-[E1 ubiquitin-activating enzyme]-L-cysteine + [E2 ubiquitin-conjugating enzyme]-L-cysteine = [E1 ubiquitin-activating enzyme]-L-cysteine + S-ubiquitinyl-[E2 ubiquitin-conjugating enzyme]-L-cysteine.. It carries out the reaction S-ubiquitinyl-[E1 ubiquitin-activating enzyme]-L-cysteine + [acceptor protein]-L-lysine = [E1 ubiquitin-activating enzyme]-L-cysteine + N(6)-monoubiquitinyl-[acceptor protein]-L-lysine.. It functions in the pathway protein modification; protein ubiquitination. In terms of biological role, catalyzes the covalent attachment of ubiquitin to other proteins. Acts as an essential factor of the anaphase promoting complex/cyclosome (APC/C), a cell cycle-regulated ubiquitin ligase that controls progression through mitosis. Acts by initiating 'Lys-11'-linked polyubiquitin chains on APC/C substrates, leading to the degradation of APC/C substrates by the proteasome and promoting mitotic exit. The sequence is that of Ubiquitin-conjugating enzyme E2 C (ube2c) from Xenopus laevis (African clawed frog).